A 278-amino-acid polypeptide reads, in one-letter code: Large ribosomal subunit protein uL2 (278 aa).

Residues 212 to 221 (NRWLGKRPHN) show a composition bias toward basic residues. The segment at 212–278 (NRWLGKRPHN…ILSSRHNRKK (67 aa)) is disordered.

The protein belongs to the universal ribosomal protein uL2 family. As to quaternary structure, part of the 50S ribosomal subunit. Forms a bridge to the 30S subunit in the 70S ribosome.

One of the primary rRNA binding proteins. Required for association of the 30S and 50S subunits to form the 70S ribosome, for tRNA binding and peptide bond formation. It has been suggested to have peptidyltransferase activity; this is somewhat controversial. Makes several contacts with the 16S rRNA in the 70S ribosome. The protein is Large ribosomal subunit protein uL2 of Methylorubrum populi (strain ATCC BAA-705 / NCIMB 13946 / BJ001) (Methylobacterium populi).